We begin with the raw amino-acid sequence, 363 residues long: UDP-N-acetylglucosamine--N-acetylmuramyl-(pentapeptide) pyrophosphoryl-undecaprenol N-acetylglucosamine transferase (363 aa).

UDP-N-acetyl-alpha-D-glucosamine-binding positions include Thr-10 to Gly-12, Asn-124, Ser-195, Ile-250, and Gln-295.

Belongs to the glycosyltransferase 28 family. MurG subfamily.

It localises to the cell membrane. It carries out the reaction di-trans,octa-cis-undecaprenyl diphospho-N-acetyl-alpha-D-muramoyl-L-alanyl-D-glutamyl-meso-2,6-diaminopimeloyl-D-alanyl-D-alanine + UDP-N-acetyl-alpha-D-glucosamine = di-trans,octa-cis-undecaprenyl diphospho-[N-acetyl-alpha-D-glucosaminyl-(1-&gt;4)]-N-acetyl-alpha-D-muramoyl-L-alanyl-D-glutamyl-meso-2,6-diaminopimeloyl-D-alanyl-D-alanine + UDP + H(+). It participates in cell wall biogenesis; peptidoglycan biosynthesis. In terms of biological role, cell wall formation. Catalyzes the transfer of a GlcNAc subunit on undecaprenyl-pyrophosphoryl-MurNAc-pentapeptide (lipid intermediate I) to form undecaprenyl-pyrophosphoryl-MurNAc-(pentapeptide)GlcNAc (lipid intermediate II). This Halalkalibacterium halodurans (strain ATCC BAA-125 / DSM 18197 / FERM 7344 / JCM 9153 / C-125) (Bacillus halodurans) protein is UDP-N-acetylglucosamine--N-acetylmuramyl-(pentapeptide) pyrophosphoryl-undecaprenol N-acetylglucosamine transferase.